A 381-amino-acid polypeptide reads, in one-letter code: uncharacterized protein (381 aa).

2 disordered regions span residues 1-20 (MPYY…FDPT) and 36-381 (IPPS…EDDE). Acidic residues predominate over residues 9–18 (NDVDDFDEFD). Composition is skewed to basic and acidic residues over residues 166-175 (TEVEYGRRPE) and 186-237 (SESE…EGYR). A phosphoserine mark is found at Ser-339, Ser-346, and Ser-357. The segment covering 364 to 374 (KKHRHKHHHQK) has biased composition (basic residues).

This is an uncharacterized protein from Arabidopsis thaliana (Mouse-ear cress).